Consider the following 318-residue polypeptide: Magnetosome protein MamM (318 aa).

The transmembrane domain (TMD) stretch occupies residues 1-210 (MRKSGCTVCS…FMDAYRGLMD (210 aa)). 4 helical membrane passes run 13–33 (IGWV…FVGL), 39–59 (AMLA…MVVI), 81–101 (FILS…LLVH), and 117–137 (LIVL…YFYS). A C-terminal domain (CTD) region spans residues 211 to 318 (HTAGEAVQNR…DEVMLSKVDN (108 aa)). Residues D249, H264, H285, and E289 each coordinate Fe cation.

It belongs to the cation diffusion facilitator (CDF) transporter (TC 2.A.4) family. As to quaternary structure, forms homodimers via its C-terminal domain (CTD) in the presence of metal cations. Interacts with MamB via their CTD.

It is found in the magnetosome membrane. Its subcellular location is the cell inner membrane. In terms of biological role, probably plays a role in biomineralization. Required for stable accumulation of MamB. Probably binds and transports iron. May nucleate iron crystal formation. This chain is Magnetosome protein MamM (mamM), found in Paramagnetospirillum magneticum (strain ATCC 700264 / AMB-1) (Magnetospirillum magneticum).